We begin with the raw amino-acid sequence, 192 residues long: UPF0301 protein Bmul_2524/BMULJ_00714 (192 aa).

The protein belongs to the UPF0301 (AlgH) family.

This chain is UPF0301 protein Bmul_2524/BMULJ_00714, found in Burkholderia multivorans (strain ATCC 17616 / 249).